Here is a 332-residue protein sequence, read N- to C-terminus: Glycerol-3-phosphate dehydrogenase [NAD(P)+] (332 aa).

Positions 10, 11, 31, 32, and 105 each coordinate NADPH. Positions 105, 136, and 138 each coordinate sn-glycerol 3-phosphate. NADPH is bound at residue Ala140. Residues Lys191, Asp244, Ser254, Arg255, and Asn256 each contribute to the sn-glycerol 3-phosphate site. Catalysis depends on Lys191, which acts as the Proton acceptor. Arg255 contacts NADPH. Val279 and Glu281 together coordinate NADPH.

The protein belongs to the NAD-dependent glycerol-3-phosphate dehydrogenase family.

The protein resides in the cytoplasm. The enzyme catalyses sn-glycerol 3-phosphate + NAD(+) = dihydroxyacetone phosphate + NADH + H(+). The catalysed reaction is sn-glycerol 3-phosphate + NADP(+) = dihydroxyacetone phosphate + NADPH + H(+). Its pathway is membrane lipid metabolism; glycerophospholipid metabolism. Functionally, catalyzes the reduction of the glycolytic intermediate dihydroxyacetone phosphate (DHAP) to sn-glycerol 3-phosphate (G3P), the key precursor for phospholipid synthesis. This Prosthecochloris aestuarii (strain DSM 271 / SK 413) protein is Glycerol-3-phosphate dehydrogenase [NAD(P)+].